The chain runs to 126 residues: Probable S-adenosyl-L-methionine-binding protein MJ1583 (126 aa).

A TsaA-like domain is found at 4-126; the sequence is LKPIGVVEQN…FSEKLDCPKI (123 aa). S-adenosyl-L-methionine contacts are provided by residues 45–46, R75, and 106–109; these read HK and YNET.

This sequence belongs to the tRNA methyltransferase O family.

This Methanocaldococcus jannaschii (strain ATCC 43067 / DSM 2661 / JAL-1 / JCM 10045 / NBRC 100440) (Methanococcus jannaschii) protein is Probable S-adenosyl-L-methionine-binding protein MJ1583.